Consider the following 473-residue polypeptide: MSDGNPELLSTSQTYNSQGESNEDYEIPPITPPNLPEPSLLHLGDHEAGYHSLCHGLAPNGLLPAYSYQAMDLPAIMVSNMLAQDGHLLSGQLPTIQEMVHSEVAAYDSGRPGPLLGRPAMLASHMSALSQSQLISQMGLRSGIAHSSPSPPGSKSATPSPSSSTQEEESDAHFKISGEKRPSTDPGKKAKNPKKKKKKDPNEPQKPVSAYALFFRDTQAAIKGQNPSATFGDVSKIVASMWDSLGEEQKQAYKRKTEAAKKEYLKALAAYRASLVSKSPPDQGEAKNAQANPPAKMLPPKQPMYAMPGLASFLTPSDLQAFRSAASPASLARTLGSKALLPGLSTSPPPPSFPLSPSLHQQLPLPPHAQGTLLSPPLSMSPAPQPPVLPAPMALQVQLAMSPSPPGPQDFPHISDFPSGSGSRSPGPSNPSSSGDWDGSYPSGERGLGTCRLCRSSPPPTTSPKNLQEPSAR.

Disordered stretches follow at residues methionine 1 to histidine 42, glycine 139 to tyrosine 211, serine 277 to glutamine 302, and leucine 340 to arginine 473. Polar residues predominate over residues leucine 8 to glutamate 20. A required for transcriptional activation region spans residues tyrosine 25 to leucine 63. Residues glycine 153–serine 164 show a composition bias toward low complexity. Residues aspartate 171 to lysine 188 show a composition bias toward basic and acidic residues. A Nuclear localization signal motif is present at residues alanine 172–proline 201. Residues lysine 189–lysine 199 are compositionally biased toward basic residues. Residues proline 204–arginine 272 constitute a DNA-binding region (HMG box). Low complexity-rich tracts occupy residues leucine 373 to proline 382 and serine 415 to serine 440. The span at serine 463–arginine 473 shows a compositional bias: polar residues.

In terms of tissue distribution, highly expressed in ovary, where it is restricted to undifferentiated granulosa cells. Expressed in hypothalamus, pituitary gland, testis and uterus.

The protein localises to the nucleus. Putative transcriptional activator involved in the hypothalamo-pituitary-gonadal system. The protein is TOX high mobility group box family member 2 (Tox2) of Rattus norvegicus (Rat).